The sequence spans 255 residues: Octanoyltransferase (255 aa).

The 185-residue stretch at 54–238 (GDANELVWLL…SFTTIFGATV (185 aa)) folds into the BPL/LPL catalytic domain. Substrate-binding positions include 92–99 (RGGQLTYH), 167–169 (AIG), and 180–182 (GIA). Cys-198 functions as the Acyl-thioester intermediate in the catalytic mechanism.

The protein belongs to the LipB family.

Its subcellular location is the cytoplasm. It carries out the reaction octanoyl-[ACP] + L-lysyl-[protein] = N(6)-octanoyl-L-lysyl-[protein] + holo-[ACP] + H(+). Its pathway is protein modification; protein lipoylation via endogenous pathway; protein N(6)-(lipoyl)lysine from octanoyl-[acyl-carrier-protein]: step 1/2. In terms of biological role, catalyzes the transfer of endogenously produced octanoic acid from octanoyl-acyl-carrier-protein onto the lipoyl domains of lipoate-dependent enzymes. Lipoyl-ACP can also act as a substrate although octanoyl-ACP is likely to be the physiological substrate. In Rhodopseudomonas palustris (strain BisB5), this protein is Octanoyltransferase.